The following is a 165-amino-acid chain: Cytochrome c-type biogenesis protein CcmE (165 aa).

Over 1–29 the chain is Cytoplasmic; it reads MSATAEQNARNPKGKGGFARTVSQRKRKR. A helical; Signal-anchor for type II membrane protein membrane pass occupies residues 30–50; it reads LFLIGGALAVLAVAVGLMLTA. The Periplasmic portion of the chain corresponds to 51 to 165; the sequence is FNQDIRFFRT…LKKKGVWEGK (115 aa). 2 residues coordinate heme: His143 and Tyr147.

Belongs to the CcmE/CycJ family.

Its subcellular location is the cell inner membrane. Heme chaperone required for the biogenesis of c-type cytochromes. Transiently binds heme delivered by CcmC and transfers the heme to apo-cytochromes in a process facilitated by CcmF and CcmH. The sequence is that of Cytochrome c-type biogenesis protein CcmE from Brucella abortus (strain S19).